The following is a 516-amino-acid chain: UDP-N-acetylmuramyl-tripeptide synthetase (516 aa).

Ser-36 lines the UDP-N-acetyl-alpha-D-muramoyl-L-alanyl-D-glutamate pocket. 113–119 (GTKGKTT) is an ATP binding site. UDP-N-acetyl-alpha-D-muramoyl-L-alanyl-D-glutamate-binding positions include 159 to 160 (TT), Ser-186, and Arg-194. Lys-228 is subject to N6-carboxylysine.

It belongs to the MurCDEF family. MurE subfamily. Post-translationally, carboxylation is probably crucial for Mg(2+) binding and, consequently, for the gamma-phosphate positioning of ATP.

It is found in the cytoplasm. The protein operates within cell wall biogenesis; peptidoglycan biosynthesis. In terms of biological role, catalyzes the addition of an amino acid to the nucleotide precursor UDP-N-acetylmuramoyl-L-alanyl-D-glutamate (UMAG) in the biosynthesis of bacterial cell-wall peptidoglycan. This Limosilactobacillus reuteri (strain DSM 20016) (Lactobacillus reuteri) protein is UDP-N-acetylmuramyl-tripeptide synthetase.